We begin with the raw amino-acid sequence, 359 residues long: Peptide chain release factor 1 (359 aa).

Glutamine 235 carries the N5-methylglutamine modification. Residues 283 to 309 (QKAESERSQARRSQVGSGDRSERIRTY) form a disordered region.

This sequence belongs to the prokaryotic/mitochondrial release factor family. Post-translationally, methylated by PrmC. Methylation increases the termination efficiency of RF1.

The protein resides in the cytoplasm. In terms of biological role, peptide chain release factor 1 directs the termination of translation in response to the peptide chain termination codons UAG and UAA. The chain is Peptide chain release factor 1 from Brucella canis (strain ATCC 23365 / NCTC 10854 / RM-666).